Here is a 298-residue protein sequence, read N- to C-terminus: Diphthine methyl ester synthase (298 aa).

S-adenosyl-L-methionine contacts are provided by residues Leu-9, Asp-85, Gly-88, 113–114 (SV), Leu-164, Leu-222, and His-247.

This sequence belongs to the diphthine synthase family.

It localises to the cytoplasm. The enzyme catalyses 2-[(3S)-amino-3-carboxypropyl]-L-histidyl-[translation elongation factor 2] + 4 S-adenosyl-L-methionine = diphthine methyl ester-[translation elongation factor 2] + 4 S-adenosyl-L-homocysteine + 3 H(+). It functions in the pathway protein modification; peptidyl-diphthamide biosynthesis. S-adenosyl-L-methionine-dependent methyltransferase that catalyzes four methylations of the modified target histidine residue in translation elongation factor 2 (EF-2), to form an intermediate called diphthine methyl ester. The four successive methylation reactions represent the second step of diphthamide biosynthesis. The polypeptide is Diphthine methyl ester synthase (DPH5) (Candida glabrata (strain ATCC 2001 / BCRC 20586 / JCM 3761 / NBRC 0622 / NRRL Y-65 / CBS 138) (Yeast)).